We begin with the raw amino-acid sequence, 159 residues long: Phosphopantetheine adenylyltransferase (159 aa).

Substrate is bound at residue Thr-9. ATP-binding positions include 9–10 (TF) and His-17. Substrate-binding residues include Lys-41, Leu-73, and Arg-87. ATP is bound by residues 88–90 (GLR), Glu-98, and 123–129 (YMFISAT).

The protein belongs to the bacterial CoaD family. In terms of assembly, homohexamer. Mg(2+) serves as cofactor.

Its subcellular location is the cytoplasm. The catalysed reaction is (R)-4'-phosphopantetheine + ATP + H(+) = 3'-dephospho-CoA + diphosphate. It functions in the pathway cofactor biosynthesis; coenzyme A biosynthesis; CoA from (R)-pantothenate: step 4/5. Reversibly transfers an adenylyl group from ATP to 4'-phosphopantetheine, yielding dephospho-CoA (dPCoA) and pyrophosphate. This is Phosphopantetheine adenylyltransferase from Nitrosomonas europaea (strain ATCC 19718 / CIP 103999 / KCTC 2705 / NBRC 14298).